The primary structure comprises 108 residues: Large ribosomal subunit protein eL36x (108 aa).

Disordered regions lie at residues 13 to 34 and 75 to 108; these read GHVVTKREQPPRPNNRKGKTSK and KLGTHKRAKRKREEMSSVLRKMRSGGAGASEKKK. Residues 75–84 are compositionally biased toward basic residues; the sequence is KLGTHKRAKR.

The protein belongs to the eukaryotic ribosomal protein eL36 family.

In Arabidopsis thaliana (Mouse-ear cress), this protein is Large ribosomal subunit protein eL36x (RPL36C).